The following is a 526-amino-acid chain: Cholesterol side-chain cleavage enzyme, mitochondrial (526 aa).

Residues 1 to 36 constitute a mitochondrion transit peptide; it reads MLAKGLSLRSVLVKGCQPFLSPTWQGPVLSTGKGAG. Over residues 30 to 41 the composition is skewed to low complexity; sequence STGKGAGTSTSS. Positions 30–49 are disordered; it reads STGKGAGTSTSSPRSFNEIP. Heme is bound at residue Cys458.

Belongs to the cytochrome P450 family. In terms of assembly, interacts with FDX1/adrenodoxin. Heme serves as cofactor.

The protein resides in the mitochondrion inner membrane. The enzyme catalyses 6 reduced [adrenodoxin] + cholesterol + 3 O2 + 6 H(+) = 4-methylpentanal + pregnenolone + 6 oxidized [adrenodoxin] + 4 H2O. The catalysed reaction is 2 reduced [adrenodoxin] + cholesterol + O2 + 2 H(+) = (22R)-hydroxycholesterol + 2 oxidized [adrenodoxin] + H2O. It carries out the reaction (22R)-hydroxycholesterol + 2 reduced [adrenodoxin] + O2 + 2 H(+) = (20R,22R)-20,22-dihydroxycholesterol + 2 oxidized [adrenodoxin] + H2O. It catalyses the reaction (20R,22R)-20,22-dihydroxycholesterol + 2 reduced [adrenodoxin] + O2 + 2 H(+) = 4-methylpentanal + pregnenolone + 2 oxidized [adrenodoxin] + 2 H2O. It participates in lipid metabolism; C21-steroid hormone metabolism. It functions in the pathway steroid metabolism; cholesterol metabolism. A cytochrome P450 monooxygenase that catalyzes the side-chain hydroxylation and cleavage of cholesterol to pregnenolone, the precursor of most steroid hormones. Catalyzes three sequential oxidation reactions of cholesterol, namely the hydroxylation at C22 followed with the hydroxylation at C20 to yield 20R,22R-hydroxycholesterol that is further cleaved between C20 and C22 to yield the C21-steroid pregnenolone and 4-methylpentanal. Mechanistically, uses molecular oxygen inserting one oxygen atom into a substrate and reducing the second into a water molecule. Two electrons are provided by NADPH via a two-protein mitochondrial transfer system comprising flavoprotein FDXR (adrenodoxin/ferredoxin reductase) and nonheme iron-sulfur protein FDX1 or FDX2 (adrenodoxin/ferredoxin). This is Cholesterol side-chain cleavage enzyme, mitochondrial from Mus musculus (Mouse).